A 432-amino-acid polypeptide reads, in one-letter code: Adenylosuccinate synthetase (432 aa).

GTP contacts are provided by residues 12 to 18 and 40 to 42; these read GDEGKGK and GHT. Catalysis depends on Asp-13, which acts as the Proton acceptor. Mg(2+)-binding residues include Asp-13 and Gly-40. Residues 13 to 16, 38 to 41, Thr-132, Arg-146, Gln-226, Thr-241, and Arg-305 each bind IMP; these read DEGK and NAGH. Residue His-41 is the Proton donor of the active site. 301–307 is a substrate binding site; that stretch reads TVTGRKR. Residues Arg-307, 333 to 335, and 415 to 417 each bind GTP; these read KLD and STS.

Belongs to the adenylosuccinate synthetase family. Homodimer. Requires Mg(2+) as cofactor.

It localises to the cytoplasm. The catalysed reaction is IMP + L-aspartate + GTP = N(6)-(1,2-dicarboxyethyl)-AMP + GDP + phosphate + 2 H(+). It functions in the pathway purine metabolism; AMP biosynthesis via de novo pathway; AMP from IMP: step 1/2. Plays an important role in the de novo pathway of purine nucleotide biosynthesis. Catalyzes the first committed step in the biosynthesis of AMP from IMP. In Allorhizobium ampelinum (strain ATCC BAA-846 / DSM 112012 / S4) (Agrobacterium vitis (strain S4)), this protein is Adenylosuccinate synthetase.